Consider the following 511-residue polypeptide: Pancreatic alpha-amylase (511 aa).

A signal peptide spans 1–15 (MKLFLLLSAFGFCWA). Glutamine 16 bears the Pyrrolidone carboxylic acid mark. Disulfide bonds link cysteine 43–cysteine 101, cysteine 85–cysteine 130, and cysteine 156–cysteine 175. Residues asparagine 115, arginine 173, and aspartate 182 each contribute to the Ca(2+) site. Arginine 210 is a chloride binding site. The Nucleophile role is filled by aspartate 212. Ca(2+) is bound at residue histidine 216. The active-site Proton donor is glutamate 248. Asparagine 313 and arginine 352 together coordinate chloride. The cysteines at positions 393 and 399 are disulfide-linked. Asparagine 427 is a glycosylation site (N-linked (GlcNAc...) asparagine). Cysteines 465 and 477 form a disulfide.

The protein belongs to the glycosyl hydrolase 13 family. As to quaternary structure, binds to the sea anemone inhibitor helianthamide and magnificamide. It depends on Ca(2+) as a cofactor. The cofactor is chloride.

It localises to the secreted. It is found in the extracellular space. The catalysed reaction is Endohydrolysis of (1-&gt;4)-alpha-D-glucosidic linkages in polysaccharides containing three or more (1-&gt;4)-alpha-linked D-glucose units.. The polypeptide is Pancreatic alpha-amylase (AMY2) (Sus scrofa (Pig)).